Here is a 125-residue protein sequence, read N- to C-terminus: Large ribosomal subunit protein bL12 (125 aa).

It belongs to the bacterial ribosomal protein bL12 family. In terms of assembly, homodimer. Part of the ribosomal stalk of the 50S ribosomal subunit. Forms a multimeric L10(L12)X complex, where L10 forms an elongated spine to which 2 to 4 L12 dimers bind in a sequential fashion. Binds GTP-bound translation factors.

Its function is as follows. Forms part of the ribosomal stalk which helps the ribosome interact with GTP-bound translation factors. Is thus essential for accurate translation. The polypeptide is Large ribosomal subunit protein bL12 (Sinorhizobium medicae (strain WSM419) (Ensifer medicae)).